The primary structure comprises 231 residues: Small ribosomal subunit protein uS3 (231 aa).

The 69-residue stretch at 39–107 (IRKHIMKAIP…DVSLNIVEIR (69 aa)) folds into the KH type-2 domain.

The protein belongs to the universal ribosomal protein uS3 family. As to quaternary structure, part of the 30S ribosomal subunit. Forms a tight complex with proteins S10 and S14.

Binds the lower part of the 30S subunit head. Binds mRNA in the 70S ribosome, positioning it for translation. The sequence is that of Small ribosomal subunit protein uS3 from Rhizorhabdus wittichii (strain DSM 6014 / CCUG 31198 / JCM 15750 / NBRC 105917 / EY 4224 / RW1) (Sphingomonas wittichii).